Here is a 1403-residue protein sequence, read N- to C-terminus: Centrosomal protein of 162 kDa (1403 aa).

Positions 20–46 (LSDDSFENSNKTPRQPNEDNKEMKKKD) are disordered. Residues 35-46 (PNEDNKEMKKKD) show a composition bias toward basic and acidic residues. 2 positions are modified to phosphoserine: serine 160 and serine 163. Disordered regions lie at residues 169–243 (LHRY…MLAN), 256–292 (VGLS…SSGD), 306–348 (SLGD…ESDL), and 453–606 (NPSL…GGNR). The span at 178–208 (PAEDGCENESEQEELPETYSDDFEDAEDADD) shows a compositional bias: acidic residues. Basic and acidic residues predominate over residues 210–238 (LITKDEETHPKENSESGKDSFPKQEEEKT). The span at 485 to 500 (PCKKARSTPSLPKRKP) shows a compositional bias: basic residues. Basic and acidic residues-rich tracts occupy residues 526-536 (LEKKTSKDNTK) and 571-585 (PHRE…RPED). Positions 614–1124 (KRAQDAEEKW…QKERRMMLSR (511 aa)) form a coiled coil. The tract at residues 1126–1147 (IPRSREETAAKRLKKDPNRGHG) is disordered. Over residues 1128–1144 (RSREETAAKRLKKDPNR) the composition is skewed to basic and acidic residues. Residues 1174–1386 (EENYRLRSEL…LDVLRELHRQ (213 aa)) adopt a coiled-coil conformation.

It belongs to the CEP162 family. In terms of assembly, interacts with CPNE4. Interacts with alpha-tubulin. Interacts with CEP290.

It is found in the cytoplasm. Its subcellular location is the cytoskeleton. It localises to the microtubule organizing center. The protein localises to the centrosome. The protein resides in the centriole. It is found in the spindle. Its subcellular location is the nucleus. Its function is as follows. Required to promote assembly of the transition zone in primary cilia. Acts by specifically recognizing and binding the axonemal microtubule. Localizes to the distal ends of centrioles before ciliogenesis and directly binds to axonemal microtubule, thereby promoting and restricting transition zone formation specifically at the cilia base. Required to mediate CEP290 association with microtubules. The polypeptide is Centrosomal protein of 162 kDa (Cep162) (Mus musculus (Mouse)).